We begin with the raw amino-acid sequence, 301 residues long: Probable alpha-L-glutamate ligase 2 (301 aa).

Positions 104-287 (LQLLSRKSIG…VADKIIQFIE (184 aa)) constitute an ATP-grasp domain. ATP is bound by residues Lys141, 178–179 (EY), Asp187, and 211–213 (RSN). Residues Asp248, Glu260, and Asn262 each contribute to the Mg(2+) site. Mn(2+) contacts are provided by Asp248, Glu260, and Asn262.

Belongs to the RimK family. Mg(2+) is required as a cofactor. It depends on Mn(2+) as a cofactor.

The polypeptide is Probable alpha-L-glutamate ligase 2 (Shewanella denitrificans (strain OS217 / ATCC BAA-1090 / DSM 15013)).